The primary structure comprises 360 residues: Probable cinnamyl alcohol dehydrogenase 9 (360 aa).

Cys50 contacts Zn(2+). Position 52 (Thr52) interacts with NADP(+). Zn(2+) contacts are provided by His72, Glu73, Cys103, Cys106, Cys109, Cys117, and Cys166. NADP(+) contacts are provided by residues Thr170, 191 to 196 (GLGGLG), 214 to 219 (SSSSTK), Thr254, Gly278, and 301 to 303 (SDV).

It belongs to the zinc-containing alcohol dehydrogenase family. Homodimer. Zn(2+) serves as cofactor. In terms of tissue distribution, expressed in the vasculature of the primary root and elongation regions. Expressed in the hypocotyl, cotyledon veins, vasculature of the first rosette leaves, and hydathodes. In stems, expressed in the vascular cambium, interfascicular cambium, developing xylem, and phloem. Expressed in the entire floral organs at late developing stage, and in the abscission, style and stigmatic regions of siliques and seed funicules.

It catalyses the reaction (E)-cinnamyl alcohol + NADP(+) = (E)-cinnamaldehyde + NADPH + H(+). It participates in aromatic compound metabolism; phenylpropanoid biosynthesis. Its function is as follows. Involved in lignin biosynthesis. May catalyze the final step specific for the production of lignin monomers, like coniferyl alcohol, sinapyl alcohol and 4-coumaryl alcohol. The chain is Probable cinnamyl alcohol dehydrogenase 9 (CAD9) from Arabidopsis thaliana (Mouse-ear cress).